The primary structure comprises 323 residues: tRNA N6-adenosine threonylcarbamoyltransferase (323 aa).

Residues histidine 106, histidine 110, and tyrosine 127 each contribute to the Fe cation site. Substrate contacts are provided by residues 127-131, aspartate 159, glycine 172, glutamate 176, and asparagine 255; that span reads YVSGA. Aspartate 283 is a binding site for Fe cation.

The protein belongs to the KAE1 / TsaD family. Monomer. Component of the KEOPS complex that consists of Kae1, Bud32, Cgi121 and Pcc1; the whole complex dimerizes. It depends on Fe(2+) as a cofactor.

The protein resides in the cytoplasm. The enzyme catalyses L-threonylcarbamoyladenylate + adenosine(37) in tRNA = N(6)-L-threonylcarbamoyladenosine(37) in tRNA + AMP + H(+). Its function is as follows. Required for the formation of a threonylcarbamoyl group on adenosine at position 37 (t(6)A37) in tRNAs that read codons beginning with adenine. Is a component of the KEOPS complex that is probably involved in the transfer of the threonylcarbamoyl moiety of threonylcarbamoyl-AMP (TC-AMP) to the N6 group of A37. Kae1 likely plays a direct catalytic role in this reaction, but requires other protein(s) of the complex to fulfill this activity. This Methanocella arvoryzae (strain DSM 22066 / NBRC 105507 / MRE50) protein is tRNA N6-adenosine threonylcarbamoyltransferase.